A 971-amino-acid chain; its full sequence is Valine--tRNA ligase (971 aa).

The 'HIGH' region motif lies at 55–65 (PNVTGSLHMGH). Positions 572–576 (KMSKS) match the 'KMSKS' region motif. K575 is an ATP binding site. Residues 906 to 933 (KAELGRLQKDLDKVQKQHDQIASKLANE) are a coiled coil.

Belongs to the class-I aminoacyl-tRNA synthetase family. ValS type 1 subfamily. As to quaternary structure, monomer.

The protein resides in the cytoplasm. It catalyses the reaction tRNA(Val) + L-valine + ATP = L-valyl-tRNA(Val) + AMP + diphosphate. Functionally, catalyzes the attachment of valine to tRNA(Val). As ValRS can inadvertently accommodate and process structurally similar amino acids such as threonine, to avoid such errors, it has a 'posttransfer' editing activity that hydrolyzes mischarged Thr-tRNA(Val) in a tRNA-dependent manner. The polypeptide is Valine--tRNA ligase (Acinetobacter baylyi (strain ATCC 33305 / BD413 / ADP1)).